Consider the following 231-residue polypeptide: Uracil phosphoribosyltransferase (231 aa).

Residue Lys-38 to Arg-42 coordinates GTP. 5-phospho-alpha-D-ribose 1-diphosphate contacts are provided by residues Arg-87, Arg-112, and Asp-140–Thr-148. Uracil-binding positions include Ile-203 and Gly-208–Ala-210. Asp-209 contacts 5-phospho-alpha-D-ribose 1-diphosphate.

It belongs to the UPRTase family. Mg(2+) is required as a cofactor.

The catalysed reaction is UMP + diphosphate = 5-phospho-alpha-D-ribose 1-diphosphate + uracil. The protein operates within pyrimidine metabolism; UMP biosynthesis via salvage pathway; UMP from uracil: step 1/1. Allosterically activated by GTP. Catalyzes the conversion of uracil and 5-phospho-alpha-D-ribose 1-diphosphate (PRPP) to UMP and diphosphate. The chain is Uracil phosphoribosyltransferase from Methanococcus maripaludis (strain C5 / ATCC BAA-1333).